A 263-amino-acid chain; its full sequence is Transcription factor bHLH27 (263 aa).

Residues 32 to 47 (EAFSGSGESSSPDGAA) show a composition bias toward low complexity. Positions 32-61 (EAFSGSGESSSPDGAATSPASSKNVVSERN) are disordered. A compositionally biased stretch (polar residues) spans 49-58 (SPASSKNVVS). Residues 50-99 (PASSKNVVSERNRRQKLNQRLFALRSVVPNISKLDKASVIKDSIDYMQEL) form the bHLH domain.

As to quaternary structure, homodimer. As to expression, expressed constitutively in roots, leaves, stems, and flowers.

It is found in the nucleus. The sequence is that of Transcription factor bHLH27 (BHLH27) from Arabidopsis thaliana (Mouse-ear cress).